A 420-amino-acid chain; its full sequence is Histidine--tRNA ligase, chloroplastic (420 aa).

This sequence belongs to the class-II aminoacyl-tRNA synthetase family.

The protein resides in the plastid. Its subcellular location is the chloroplast. It carries out the reaction tRNA(His) + L-histidine + ATP = L-histidyl-tRNA(His) + AMP + diphosphate + H(+). In Gracilaria tenuistipitata var. liui (Red alga), this protein is Histidine--tRNA ligase, chloroplastic.